A 362-amino-acid polypeptide reads, in one-letter code: 3-dehydroquinate synthase (362 aa).

Residues 71 to 76 (DGEQNK), 105 to 109 (GVIGD), 129 to 130 (TT), K142, and K151 each bind NAD(+). 3 residues coordinate Zn(2+): E184, H247, and H264.

This sequence belongs to the sugar phosphate cyclases superfamily. Dehydroquinate synthase family. Co(2+) is required as a cofactor. It depends on Zn(2+) as a cofactor. Requires NAD(+) as cofactor.

The protein resides in the cytoplasm. It carries out the reaction 7-phospho-2-dehydro-3-deoxy-D-arabino-heptonate = 3-dehydroquinate + phosphate. It functions in the pathway metabolic intermediate biosynthesis; chorismate biosynthesis; chorismate from D-erythrose 4-phosphate and phosphoenolpyruvate: step 2/7. Catalyzes the conversion of 3-deoxy-D-arabino-heptulosonate 7-phosphate (DAHP) to dehydroquinate (DHQ). This is 3-dehydroquinate synthase from Blochmanniella pennsylvanica (strain BPEN).